The primary structure comprises 537 residues: CTP synthase (537 aa).

Residues 1-269 (MNQTKYIFVT…DKVALKKLDL (269 aa)) form an amidoligase domain region. Serine 15 contacts CTP. UTP is bound at residue serine 15. 16-21 (SLGKGI) is a binding site for ATP. Tyrosine 56 lines the L-glutamine pocket. Aspartate 73 contributes to the ATP binding site. Positions 73 and 143 each coordinate Mg(2+). Residues 150–152 (DIE), 190–195 (KTKPTQ), and lysine 226 contribute to the CTP site. UTP is bound by residues 190–195 (KTKPTQ) and lysine 226. One can recognise a Glutamine amidotransferase type-1 domain in the interval 295–537 (SIGLVGKYVE…IAAAVKHKNK (243 aa)). Glycine 357 contacts L-glutamine. The Nucleophile; for glutamine hydrolysis role is filled by cysteine 384. L-glutamine-binding positions include 385–388 (LGMQ), glutamate 408, and arginine 465. Catalysis depends on residues histidine 510 and glutamate 512.

Belongs to the CTP synthase family. As to quaternary structure, homotetramer.

It carries out the reaction UTP + L-glutamine + ATP + H2O = CTP + L-glutamate + ADP + phosphate + 2 H(+). It catalyses the reaction L-glutamine + H2O = L-glutamate + NH4(+). The enzyme catalyses UTP + NH4(+) + ATP = CTP + ADP + phosphate + 2 H(+). It functions in the pathway pyrimidine metabolism; CTP biosynthesis via de novo pathway; CTP from UDP: step 2/2. Its activity is regulated as follows. Allosterically activated by GTP, when glutamine is the substrate; GTP has no effect on the reaction when ammonia is the substrate. The allosteric effector GTP functions by stabilizing the protein conformation that binds the tetrahedral intermediate(s) formed during glutamine hydrolysis. Inhibited by the product CTP, via allosteric rather than competitive inhibition. Functionally, catalyzes the ATP-dependent amination of UTP to CTP with either L-glutamine or ammonia as the source of nitrogen. Regulates intracellular CTP levels through interactions with the four ribonucleotide triphosphates. The polypeptide is CTP synthase (Flavobacterium psychrophilum (strain ATCC 49511 / DSM 21280 / CIP 103535 / JIP02/86)).